We begin with the raw amino-acid sequence, 80 residues long: Small ribosomal subunit protein uS17 (80 aa).

The protein belongs to the universal ribosomal protein uS17 family. As to quaternary structure, part of the 30S ribosomal subunit.

In terms of biological role, one of the primary rRNA binding proteins, it binds specifically to the 5'-end of 16S ribosomal RNA. This Brucella anthropi (strain ATCC 49188 / DSM 6882 / CCUG 24695 / JCM 21032 / LMG 3331 / NBRC 15819 / NCTC 12168 / Alc 37) (Ochrobactrum anthropi) protein is Small ribosomal subunit protein uS17.